Consider the following 272-residue polypeptide: Cerberus (272 aa).

A signal peptide spans 1-17 (MHLLLVQLLVLLPLGKA). 4 cysteine pairs are disulfide-bonded: Cys-162–Cys-209, Cys-176–Cys-223, Cys-186–Cys-239, and Cys-190–Cys-241. The CTCK domain occupies 162–246 (CRTVPFNQTI…EECQCMVKTE (85 aa)). N-linked (GlcNAc...) asparagine glycosylation is found at Asn-168 and Asn-222.

It belongs to the DAN family. Forms monomers and predominantly dimers. Post-translationally, N-glycosylated.

It localises to the secreted. Functionally, cytokine that may play a role in anterior neural induction and somite formation during embryogenesis in part, through a BMP-inhibitory mechanism. Can regulate Nodal signaling during gastrulation as well as the formation and patterning of the primitive streak. The chain is Cerberus (Cer1) from Mus musculus (Mouse).